The chain runs to 287 residues: 4-hydroxybenzoate octaprenyltransferase (287 aa).

7 helical membrane-spanning segments follow: residues 30–50 (ALWI…FALG), 92–112 (IAIA…LNGL), 133–153 (FFAI…PMAF), 158–178 (DTVP…SVAY), 207–227 (VLAI…LGAA), 232–252 (WPYW…YTLI), and 266–286 (HNNW…ALAV).

It belongs to the UbiA prenyltransferase family. The cofactor is Mg(2+).

It localises to the cell inner membrane. It catalyses the reaction all-trans-octaprenyl diphosphate + 4-hydroxybenzoate = 4-hydroxy-3-(all-trans-octaprenyl)benzoate + diphosphate. It participates in cofactor biosynthesis; ubiquinone biosynthesis. Its function is as follows. Catalyzes the prenylation of para-hydroxybenzoate (PHB) with an all-trans polyprenyl group. Mediates the second step in the final reaction sequence of ubiquinone-8 (UQ-8) biosynthesis, which is the condensation of the polyisoprenoid side chain with PHB, generating the first membrane-bound Q intermediate 3-octaprenyl-4-hydroxybenzoate. The polypeptide is 4-hydroxybenzoate octaprenyltransferase (Burkholderia pseudomallei (strain 1106a)).